Consider the following 143-residue polypeptide: MSTLSSEARVVGIDVGTKRVGVAVADPLRLFAQPHGTYAPDEALDVLQALRDADGIARIVVGWPLTEEGTAEEATEMVEAYVERIREALGTVEVAREDERYTSEIAKDLLREAGVSQPGRYDKGRVDAAAAAVILQGFLNRTG.

Belongs to the YqgF nuclease family.

Its subcellular location is the cytoplasm. Functionally, could be a nuclease involved in processing of the 5'-end of pre-16S rRNA. The protein is Putative pre-16S rRNA nuclease of Salinibacter ruber (strain DSM 13855 / M31).